A 415-amino-acid chain; its full sequence is Probable G-protein coupled receptor 19 (415 aa).

Topologically, residues 1-69 (MGFDHRMETD…LNPGEVATAS (69 aa)) are extracellular. 2 N-linked (GlcNAc...) asparagine glycosylation sites follow: Asn-25 and Asn-52. A helical transmembrane segment spans residues 70–90 (IFFGALWLFSIFGNSLVCLVI). At 91-102 (HRSRRTQSTTNY) the chain is on the cytoplasmic side. The chain crosses the membrane as a helical span at residues 103-123 (FVVSMACADLLISVASTPFVV). The Extracellular segment spans residues 124-152 (LQFTTGRWTLGSAMCKVVRYFQYLTPGVQ). The cysteines at positions 138 and 210 are disulfide-linked. A helical transmembrane segment spans residues 153–173 (IYVLLSICIDRFYTIVYPLSF). The Cytoplasmic portion of the chain corresponds to 174-182 (KVSREKAKR). A helical transmembrane segment spans residues 183–203 (MIAASWILDAAFVTPVFFFYG). Residues 204-221 (SNWDSHCNYFLPPSWEGT) lie on the Extracellular side of the membrane. The chain crosses the membrane as a helical span at residues 222-242 (AYTVIHFLVGFVIPSVLIILF). The Cytoplasmic segment spans residues 243-277 (YQKVIKYIWRIGTDGRTLRRTMNIVPRTKVKTVKM). A helical transmembrane segment spans residues 278–298 (FLLLNLVFLFSWLPFHVAQLW). Residues 299–309 (HPHEQDYRKSS) are Extracellular-facing. Residues 310 to 332 (LVFTAVTWVSFSSSASKPTLYSI) traverse the membrane as a helical segment. Residues 333-415 (YNANFRRGMK…INSNPPNTFV (83 aa)) are Cytoplasmic-facing.

It belongs to the G-protein coupled receptor 1 family. Abundant expression in the brain.

The protein resides in the cell membrane. In terms of biological role, G-protein coupled receptor that plays a role in the regulation of circadian rhythms and energy metabolism. Participates in maintaining proper circadian gene expression in the suprachiasmatic nucleus (SCN), the locus of the master circadian clock in the brain. May function as a coordinator of aging-associated metabolic dysfunction, stress response, DNA integrity management, and eventual senescence. Upon binding to adropin, modulates mitochondrial energy metabolism via the p44/42-PDK4 signaling pathway, influencing pyruvate dehydrogenase activity. The polypeptide is Probable G-protein coupled receptor 19 (Gpr19) (Rattus norvegicus (Rat)).